The following is a 136-amino-acid chain: Ribosome-binding factor A (136 aa).

Belongs to the RbfA family. As to quaternary structure, monomer. Binds 30S ribosomal subunits, but not 50S ribosomal subunits or 70S ribosomes.

It is found in the cytoplasm. Functionally, one of several proteins that assist in the late maturation steps of the functional core of the 30S ribosomal subunit. Associates with free 30S ribosomal subunits (but not with 30S subunits that are part of 70S ribosomes or polysomes). Required for efficient processing of 16S rRNA. May interact with the 5'-terminal helix region of 16S rRNA. This Yersinia pestis bv. Antiqua (strain Antiqua) protein is Ribosome-binding factor A.